An 89-amino-acid polypeptide reads, in one-letter code: Small ribosomal subunit protein bS20 (89 aa).

It belongs to the bacterial ribosomal protein bS20 family.

Binds directly to 16S ribosomal RNA. This chain is Small ribosomal subunit protein bS20, found in Helicobacter pylori (strain P12).